The following is a 282-amino-acid chain: Putative polysaccharide deacetylase YheN (282 aa).

Residues 15–35 (LAFKFASLAVLCVLLLLMVIL) traverse the membrane as a helical segment. In terms of domain architecture, NodB homology spans 85–271 (KTVYLTFDDG…KLKEKGYSFG (187 aa)).

Belongs to the polysaccharide deacetylase family.

The protein localises to the cell membrane. The protein is Putative polysaccharide deacetylase YheN (yheN) of Bacillus subtilis (strain 168).